The following is an 87-amino-acid chain: DNA-directed RNA polymerase subunit omega (87 aa).

Belongs to the RNA polymerase subunit omega family. The RNAP catalytic core consists of 2 alpha, 1 beta, 1 beta' and 1 omega subunit. When a sigma factor is associated with the core the holoenzyme is formed, which can initiate transcription.

The catalysed reaction is RNA(n) + a ribonucleoside 5'-triphosphate = RNA(n+1) + diphosphate. Its function is as follows. Promotes RNA polymerase assembly. Latches the N- and C-terminal regions of the beta' subunit thereby facilitating its interaction with the beta and alpha subunits. The polypeptide is DNA-directed RNA polymerase subunit omega (Leifsonia xyli subsp. xyli (strain CTCB07)).